Here is a 75-residue protein sequence, read N- to C-terminus: Guanine nucleotide-binding protein G(I)/G(S)/G(O) subunit gamma-3 (75 aa).

Position 5 is a phosphothreonine (Thr5). The residue at position 9 (Ser9) is a Phosphoserine. Residue Thr10 is modified to Phosphothreonine. Ser12 bears the Phosphoserine mark. Cys72 is subject to Cysteine methyl ester. Cys72 carries S-geranylgeranyl cysteine lipidation. Positions 73–75 (ALL) are cleaved as a propeptide — removed in mature form.

It belongs to the G protein gamma family. G proteins are composed of 3 units, alpha, beta and gamma. Forms a complex with GNAO1 and GNB1. Interacts with SCN8A. As to expression, abundantly expressed in brain. Low levels in testis.

It is found in the cell membrane. Functionally, guanine nucleotide-binding proteins (G proteins) are involved as a modulator or transducer in various transmembrane signaling systems. The beta and gamma chains are required for the GTPase activity, for replacement of GDP by GTP, and for G protein-effector interaction. The polypeptide is Guanine nucleotide-binding protein G(I)/G(S)/G(O) subunit gamma-3 (GNG3) (Bos taurus (Bovine)).